Here is a 213-residue protein sequence, read N- to C-terminus: LexA repressor (213 aa).

Residues 29 to 49 constitute a DNA-binding region (H-T-H motif); it reads RAEIAQALGFRSPNAAEDHLK. Residues S131 and K168 each act as for autocatalytic cleavage activity in the active site.

The protein belongs to the peptidase S24 family. As to quaternary structure, homodimer.

It carries out the reaction Hydrolysis of Ala-|-Gly bond in repressor LexA.. In terms of biological role, represses a number of genes involved in the response to DNA damage (SOS response), including recA and lexA. In the presence of single-stranded DNA, RecA interacts with LexA causing an autocatalytic cleavage which disrupts the DNA-binding part of LexA, leading to derepression of the SOS regulon and eventually DNA repair. This Bordetella avium (strain 197N) protein is LexA repressor.